The following is a 193-amino-acid chain: DNA damage-inducible transcript 4-like protein (193 aa).

It belongs to the DDIT4 family.

It is found in the cytoplasm. Its function is as follows. Inhibits cell growth by regulating the TOR signaling pathway upstream of the TSC1-TSC2 complex and downstream of AKT1. This Pongo abelii (Sumatran orangutan) protein is DNA damage-inducible transcript 4-like protein (DDIT4L).